A 613-amino-acid polypeptide reads, in one-letter code: Portal protein (613 aa).

The tract at residues 577 to 613 (ATGGDHGIRQAPSARGDTEPDHAKSKPARDPPPGAGS) is disordered. The segment covering 592–605 (GDTEPDHAKSKPAR) has biased composition (basic and acidic residues).

This sequence belongs to the herpesviridae portal protein family. Homododecamerizes. Interacts with terminase subunits TRM1 and TRM3.

It localises to the virion. Its subcellular location is the host nucleus. The protein resides in the host cytoplasm. Its function is as follows. Forms a portal in the viral capsid through which viral DNA is translocated during DNA packaging. Assembles as a dodecamer at a single fivefold axe of the T=16 icosahedric capsid. Binds to the molecular motor that translocates the viral DNA, termed terminase. In Epstein-Barr virus (strain B95-8) (HHV-4), this protein is Portal protein.